Reading from the N-terminus, the 309-residue chain is Homoserine kinase (309 aa).

91 to 101 (PIGSGLGSSAC) provides a ligand contact to ATP.

It belongs to the GHMP kinase family. Homoserine kinase subfamily.

It localises to the cytoplasm. The enzyme catalyses L-homoserine + ATP = O-phospho-L-homoserine + ADP + H(+). The protein operates within amino-acid biosynthesis; L-threonine biosynthesis; L-threonine from L-aspartate: step 4/5. In terms of biological role, catalyzes the ATP-dependent phosphorylation of L-homoserine to L-homoserine phosphate. In Yersinia pseudotuberculosis serotype O:1b (strain IP 31758), this protein is Homoserine kinase.